We begin with the raw amino-acid sequence, 441 residues long: N-acetylmuramyl-L-alanine amidase (441 aa).

The signal sequence occupies residues 1 to 25; sequence MKTKTLFIFSAILTLSIFAPNETFA.

It belongs to the peptidase S12 family.

The catalysed reaction is Hydrolyzes the link between N-acetylmuramoyl residues and L-amino acid residues in certain cell-wall glycopeptides.. The protein operates within cell wall biogenesis; peptidoglycan recycling. Involved in muropeptide recycling. Hydrolyzes the amide bond between N-acetylmuramic acid (MurNAc) and the L-alanine residue of the stem peptide. Cannot hydrolyze muropeptides containing N-acetylglucosamine (GlcNAc) at the non-reducing end. The polypeptide is N-acetylmuramyl-L-alanine amidase (Bacillus subtilis (strain 168)).